The following is a 57-amino-acid chain: Large ribosomal subunit protein bL32 (57 aa).

The protein belongs to the bacterial ribosomal protein bL32 family.

This chain is Large ribosomal subunit protein bL32, found in Bacillus licheniformis (strain ATCC 14580 / DSM 13 / JCM 2505 / CCUG 7422 / NBRC 12200 / NCIMB 9375 / NCTC 10341 / NRRL NRS-1264 / Gibson 46).